A 658-amino-acid chain; its full sequence is Transcription factor E2-alpha (658 aa).

Disordered regions lie at residues 42–82 (STQF…GTHY), 140–191 (SALS…YPAN), 276–313 (NPSV…GTAT), 331–372 (DHSS…SYDG), 460–558 (VPAQ…ERRV), and 628–658 (EEEK…VGHM). The short motif at 173–179 (PKKVRKV) is the Nuclear localization signal element. Over residues 276 to 303 (NPSVTSSFSSTPAQYGVSSHTPPISTGD) the composition is skewed to polar residues. The span at 333–344 (SSTNFSSTPSTP) shows a compositional bias: low complexity. Residues 345 to 355 (VGSPQGITGSG) are compositionally biased toward polar residues. The span at 493 to 507 (PDIKRESKEDEENRS) shows a compositional bias: basic and acidic residues. Acidic residues predominate over residues 533 to 544 (QDEDEDEDDDNL). The segment covering 548-558 (QKAEREKERRV) has biased composition (basic and acidic residues). In terms of domain architecture, bHLH spans 555–608 (ERRVANNARERLRVKDINEAFKELGRMCQLHLNSEKPQTKLLILHQAVSVILSL).

As to quaternary structure, homodimer. Heterodimer; efficient DNA binding requires dimerization with another bHLH protein. Interacts with tgfb1i1.

The protein localises to the nucleus. Transcriptional regulator involved in the initiation of neuronal differentiation and mesenchymal to epithelial transition. Heterodimers between tcf3 and tissue-specific basic helix-loop-helix (bHLH) proteins play major roles in determining tissue-specific cell fate during embryogenesis, like muscle or early B-cell differentiation. Together with tcf15, required for the mesenchymal to epithelial transition. Dimers bind DNA on E-box motifs: 5'-CANNTG-3'. This chain is Transcription factor E2-alpha (tcf3), found in Xenopus laevis (African clawed frog).